A 700-amino-acid chain; its full sequence is Probable transcription factor FUP6 (700 aa).

Disordered stretches follow at residues 343–364 (SEAG…NRHS) and 577–624 (FDSV…PLNQ). Residues 577 to 595 (FDSVHSGRDSVSSAMNYQS) show a composition bias toward polar residues. Basic and acidic residues predominate over residues 596 to 607 (DSRKRARLDTES). Polar residues predominate over residues 608–623 (NPRSSQRNDGSGQPLN).

The protein localises to the nucleus. Functionally, probable transcrition factor; part of the gene cluster that mediates the biosynthesis of the mycotoxin fusaproliferin (FUP) that belongs to the class of bicyclic sesterterpenoids. The chain is Probable transcription factor FUP6 from Fusarium proliferatum (strain ET1) (Orchid endophyte fungus).